Reading from the N-terminus, the 406-residue chain is 5-hydroxytryptamine receptor 4 (406 aa).

At 1-19 (MDRLDANVSSNEGFGSVEK) the chain is on the extracellular side. An N-linked (GlcNAc...) asparagine glycan is attached at N7. A helical membrane pass occupies residues 20–44 (VVLLTFFAMVILMAILGNLLVMVAV). Topologically, residues 45–54 (CRDRQLRKIK) are cytoplasmic. Residues 55–78 (TNYFIVSLAFADLLVSVLVNAFGA) form a helical membrane-spanning segment. The Extracellular segment spans residues 79 to 92 (IELVQDIWFYGEMF). A helical transmembrane segment spans residues 93 to 117 (CLVRTSLDVLLTTASIFHLCCISLD). A disulfide bridge links C93 with C184. D100 is a serotonin binding site. The Cytoplasmic portion of the chain corresponds to 118–133 (RYYAICCQPLVYRNKM). Residues 134-157 (TPLRIALMLGGCWVIPMFISFLPI) traverse the membrane as a helical segment. The Extracellular segment spans residues 158 to 188 (MQGWNNIGIVDVIEKRKFNHNSNSTFCVFMV). The helical transmembrane segment at 189–212 (NKPYAITCSVVAFYIPFLLMVLAY) threads the bilayer. Over 213–257 (YRIYVTAKEHAQQIQMLQRAGATSESRPQTADQHSTHRMRTETKA) the chain is Cytoplasmic. The chain crosses the membrane as a helical span at residues 258-283 (AKTLCVIMGCFCFCWAPFFVTNIVDP). N279 contacts serotonin. Topologically, residues 284-290 (FIDYTVP) are extracellular. A helical transmembrane segment spans residues 291–314 (EKVWTAFLWLGYINSGLNPFLYAF). Topologically, residues 315–406 (LNKSFRRAFL…DSCSLKRSQS (92 aa)) are cytoplasmic.

The protein belongs to the G-protein coupled receptor 1 family. Interacts (via C-terminus 330-346 AA) with GRK5; this interaction is promoted by 5-HT (serotonin). As to expression, in brain, isoform 5-HT4S is restricted to the striatum. In peripheral tissues, differential expression is also observed in the atrium of the heart where only isoform 5-HT4S is detectable. In brain, isoform 5-HT4L is expressed throughout the brain, except in the cerebellum.

It localises to the cell membrane. Its subcellular location is the endosome membrane. Functionally, G-protein coupled receptor for 5-hydroxytryptamine (serotonin), a biogenic hormone that functions as a neurotransmitter, a hormone and a mitogen. Ligand binding causes a conformation change that triggers signaling via guanine nucleotide-binding proteins (G proteins) and modulates the activity of downstream effectors. HTR4 is coupled to G(s) G alpha proteins and mediates activation of adenylate cyclase activity. The protein is 5-hydroxytryptamine receptor 4 (Htr4) of Rattus norvegicus (Rat).